A 587-amino-acid polypeptide reads, in one-letter code: MHRYRSHTCGELRSSDVGTDVRLSGWLHNRRDLGGILFIDLRDHYGITQLVARPGTEAYEALDKLTKESTVRVDGKVVSRGADNINPDLPTGEVEVEVGEVELLGAAQPLPFTINTEDGVNEERRLEYRFLDLRRERMHRNIMLRTSVISSIRSKMVALGFNEMATPILTATSPEGARDFVVPSRLHAGRFYALPQAPQQFKQLLMISGFDRYFQIAPCFRDEDARADRSPGEFYQLDVEMSFVEQEDVFRPIEQLMTELFEEFGNGRHVTSPFPRIPFREAMLKYGSDKPDLRAQLELVDITDVFEGSEFKAFAGKHVRALPVPDVSGQPRRFFDQLGDYAVSQGAKGLAWVRVGEDGKLSGPIAKFLTEENVAELTKRLSLAPGHAVFFGAGEFDEVSKIMGAVRVEAAKRAGHFEENVFRFCWIVDFPMYEKDEETGKIDFSHNPFSMPQGGMDALENQDPLDILAWQYDIVCNGVELSSGAIRNHEPEIMLKAFEIAGYDAETVEREFAGMLRAFRFGAPPHGGIAPGVDRIVMLLADEPNIRETIAFPLNGNAQDLMMGAPTELDESRLRELHLTVRKPQPK.

Glutamate 175 contributes to the L-aspartate binding site. The segment at 199–202 (QQFK) is aspartate. 2 residues coordinate L-aspartate: arginine 221 and histidine 446. 221-223 (RDE) lines the ATP pocket. An ATP-binding site is contributed by glutamate 480. Arginine 487 contributes to the L-aspartate binding site. 532–535 (GVDR) lines the ATP pocket.

The protein belongs to the class-II aminoacyl-tRNA synthetase family. Type 1 subfamily. As to quaternary structure, homodimer.

Its subcellular location is the cytoplasm. The enzyme catalyses tRNA(Asp) + L-aspartate + ATP = L-aspartyl-tRNA(Asp) + AMP + diphosphate. Functionally, catalyzes the attachment of L-aspartate to tRNA(Asp) in a two-step reaction: L-aspartate is first activated by ATP to form Asp-AMP and then transferred to the acceptor end of tRNA(Asp). The chain is Aspartate--tRNA ligase from Streptomyces coelicolor (strain ATCC BAA-471 / A3(2) / M145).